We begin with the raw amino-acid sequence, 382 residues long: D-alanine--D-alanine ligase (382 aa).

The region spanning 161-372 (KVVFESAGLH…YAELIDELIH (212 aa)) is the ATP-grasp domain. An ATP-binding site is contributed by 193–248 (VDRLGFPVFVKPARAGSSMGISKVDSLEGLDAAIEEARRHDLKLVIEAGIVGREIE). Mg(2+)-binding residues include Asp326, Glu339, and Asn341.

It belongs to the D-alanine--D-alanine ligase family. Mg(2+) serves as cofactor. The cofactor is Mn(2+).

Its subcellular location is the cytoplasm. The catalysed reaction is 2 D-alanine + ATP = D-alanyl-D-alanine + ADP + phosphate + H(+). The protein operates within cell wall biogenesis; peptidoglycan biosynthesis. Its function is as follows. Cell wall formation. This is D-alanine--D-alanine ligase from Pseudarthrobacter chlorophenolicus (strain ATCC 700700 / DSM 12829 / CIP 107037 / JCM 12360 / KCTC 9906 / NCIMB 13794 / A6) (Arthrobacter chlorophenolicus).